The primary structure comprises 221 residues: GTP-binding nuclear protein Ran/TC4 (221 aa).

The Small GTPase Ran-type domain maps to 10–174 (DYPSFKLVIV…LYLARKLAGD (165 aa)). Residue 21–28 (DGGTGKTT) participates in GTP binding. Residues 40-48 (KKYEPTIGV) are switch-I. Residues Gly71, 125 to 128 (NKVD), and 153 to 155 (SAK) contribute to the GTP site. Positions 71–87 (GQEKFGGLRDGYYIHGQ) are switch-II.

Belongs to the small GTPase superfamily. Ran family. Found in a nuclear export complex with RanGTP, exportin and pre-miRNA.

The protein localises to the nucleus. GTP-binding protein involved in nucleocytoplasmic transport. Required for the import of protein into the nucleus and also for RNA export. Involved in chromatin condensation and control of cell cycle. In Vicia faba (Broad bean), this protein is GTP-binding nuclear protein Ran/TC4.